A 159-amino-acid polypeptide reads, in one-letter code: Transcription elongation factor GreA (159 aa).

A coiled-coil region spans residues Met-1–Arg-76.

This sequence belongs to the GreA/GreB family.

Functionally, necessary for efficient RNA polymerase transcription elongation past template-encoded arresting sites. The arresting sites in DNA have the property of trapping a certain fraction of elongating RNA polymerases that pass through, resulting in locked ternary complexes. Cleavage of the nascent transcript by cleavage factors such as GreA or GreB allows the resumption of elongation from the new 3'terminus. GreA releases sequences of 2 to 3 nucleotides. This is Transcription elongation factor GreA from Syntrophomonas wolfei subsp. wolfei (strain DSM 2245B / Goettingen).